The following is a 205-amino-acid chain: Arginine exporter protein ArgO (205 aa).

A run of 6 helical transmembrane segments spans residues 1 to 21 (MLAV…PLGP), 37 to 57 (LMVA…GIFG), 68 to 88 (LLAL…WGAF), 112 to 132 (VVTM…TFVV), 147 to 167 (WFAL…ALLA), and 182 to 202 (IINT…AWQG).

This sequence belongs to the LysE/ArgO transporter (TC 2.A.75) family.

It localises to the cell inner membrane. The catalysed reaction is L-arginine(in) = L-arginine(out). Functionally, involved in the export of arginine. Important to control the intracellular level of arginine and the correct balance between arginine and lysine. In Serratia proteamaculans (strain 568), this protein is Arginine exporter protein ArgO.